The primary structure comprises 431 residues: Glutamyl-tRNA reductase (431 aa).

Residues 49–52 (TCDR), Ser-109, 114–116 (EPH), and Gln-120 contribute to the substrate site. Cys-50 acts as the Nucleophile in catalysis. Position 189-194 (189-194 (GTQEMG)) interacts with NADP(+).

The protein belongs to the glutamyl-tRNA reductase family. As to quaternary structure, homodimer.

It catalyses the reaction (S)-4-amino-5-oxopentanoate + tRNA(Glu) + NADP(+) = L-glutamyl-tRNA(Glu) + NADPH + H(+). The protein operates within porphyrin-containing compound metabolism; protoporphyrin-IX biosynthesis; 5-aminolevulinate from L-glutamyl-tRNA(Glu): step 1/2. It participates in porphyrin-containing compound metabolism; chlorophyll biosynthesis. Its function is as follows. Catalyzes the NADPH-dependent reduction of glutamyl-tRNA(Glu) to glutamate 1-semialdehyde (GSA). The protein is Glutamyl-tRNA reductase of Rhodospirillum rubrum (strain ATCC 11170 / ATH 1.1.1 / DSM 467 / LMG 4362 / NCIMB 8255 / S1).